The sequence spans 166 residues: Mitochondrial fission process protein 1 (166 aa).

The next 3 helical transmembrane spans lie at serine 33 to alanine 53, alanine 78 to phenylalanine 98, and threonine 125 to valine 145.

The protein belongs to the MTFP1 family.

The protein resides in the mitochondrion inner membrane. Functionally, involved in the mitochondrial division probably by regulating membrane fission. Loss-of-function leads to apoptosis. The polypeptide is Mitochondrial fission process protein 1 (mtp-18) (Caenorhabditis elegans).